The following is a 185-amino-acid chain: Elongation factor P (185 aa).

Belongs to the elongation factor P family.

The protein localises to the cytoplasm. It functions in the pathway protein biosynthesis; polypeptide chain elongation. Involved in peptide bond synthesis. Stimulates efficient translation and peptide-bond synthesis on native or reconstituted 70S ribosomes in vitro. Probably functions indirectly by altering the affinity of the ribosome for aminoacyl-tRNA, thus increasing their reactivity as acceptors for peptidyl transferase. The protein is Elongation factor P of Acetivibrio thermocellus (strain ATCC 27405 / DSM 1237 / JCM 9322 / NBRC 103400 / NCIMB 10682 / NRRL B-4536 / VPI 7372) (Clostridium thermocellum).